Reading from the N-terminus, the 384-residue chain is Chaperone protein DnaJ (384 aa).

Positions 6–71 (DYYEVLGISK…TKRKTYDQFG (66 aa)) constitute a J domain. The segment at 141 to 223 (GKKMSIKVNR…CHGTGNTRKV (83 aa)) adopts a CR-type zinc-finger fold. Positions 154, 157, 171, 174, 197, 200, 211, and 214 each coordinate Zn(2+). CXXCXGXG motif repeat units follow at residues 154–161 (CEECNGTG), 171–178 (CSTCNGTG), 197–204 (CSACNGTG), and 211–218 (CSKCHGTG).

It belongs to the DnaJ family. As to quaternary structure, homodimer. Zn(2+) is required as a cofactor.

It localises to the cytoplasm. In terms of biological role, participates actively in the response to hyperosmotic and heat shock by preventing the aggregation of stress-denatured proteins and by disaggregating proteins, also in an autonomous, DnaK-independent fashion. Unfolded proteins bind initially to DnaJ; upon interaction with the DnaJ-bound protein, DnaK hydrolyzes its bound ATP, resulting in the formation of a stable complex. GrpE releases ADP from DnaK; ATP binding to DnaK triggers the release of the substrate protein, thus completing the reaction cycle. Several rounds of ATP-dependent interactions between DnaJ, DnaK and GrpE are required for fully efficient folding. Also involved, together with DnaK and GrpE, in the DNA replication of plasmids through activation of initiation proteins. The chain is Chaperone protein DnaJ from Clostridioides difficile (strain 630) (Peptoclostridium difficile).